The primary structure comprises 343 residues: Glycerol-3-phosphate dehydrogenase [NAD(P)+] (343 aa).

Positions 29, 49, and 122 each coordinate NADPH. Sn-glycerol 3-phosphate-binding residues include Lys-122, Gly-150, and Ser-152. An NADPH-binding site is contributed by Ala-154. Residues Lys-205, Asp-258, Ser-268, Arg-269, and Asn-270 each contribute to the sn-glycerol 3-phosphate site. Lys-205 acts as the Proton acceptor in catalysis. Arg-269 serves as a coordination point for NADPH. NADPH-binding residues include Leu-288 and Glu-290.

The protein belongs to the NAD-dependent glycerol-3-phosphate dehydrogenase family.

Its subcellular location is the cytoplasm. The enzyme catalyses sn-glycerol 3-phosphate + NAD(+) = dihydroxyacetone phosphate + NADH + H(+). The catalysed reaction is sn-glycerol 3-phosphate + NADP(+) = dihydroxyacetone phosphate + NADPH + H(+). The protein operates within membrane lipid metabolism; glycerophospholipid metabolism. In terms of biological role, catalyzes the reduction of the glycolytic intermediate dihydroxyacetone phosphate (DHAP) to sn-glycerol 3-phosphate (G3P), the key precursor for phospholipid synthesis. The chain is Glycerol-3-phosphate dehydrogenase [NAD(P)+] from Mesorhizobium japonicum (strain LMG 29417 / CECT 9101 / MAFF 303099) (Mesorhizobium loti (strain MAFF 303099)).